The chain runs to 81 residues: Defensin-like protein 43 (81 aa).

A signal peptide spans 1–27 (MGITKTSVTFLFLLILAAFVSNYNVLA). 4 disulfides stabilise this stretch: cysteine 40/cysteine 79, cysteine 44/cysteine 67, cysteine 53/cysteine 77, and cysteine 57/cysteine 78.

This sequence belongs to the DEFL family.

Its subcellular location is the secreted. This Arabidopsis thaliana (Mouse-ear cress) protein is Defensin-like protein 43.